The sequence spans 496 residues: Probable cytosol aminopeptidase (496 aa).

The Mn(2+) site is built by lysine 266 and aspartate 271. The active site involves lysine 278. Residues aspartate 289, aspartate 348, and glutamate 350 each coordinate Mn(2+). Arginine 352 is an active-site residue.

The protein belongs to the peptidase M17 family. It depends on Mn(2+) as a cofactor.

It localises to the cytoplasm. It carries out the reaction Release of an N-terminal amino acid, Xaa-|-Yaa-, in which Xaa is preferably Leu, but may be other amino acids including Pro although not Arg or Lys, and Yaa may be Pro. Amino acid amides and methyl esters are also readily hydrolyzed, but rates on arylamides are exceedingly low.. The catalysed reaction is Release of an N-terminal amino acid, preferentially leucine, but not glutamic or aspartic acids.. Presumably involved in the processing and regular turnover of intracellular proteins. Catalyzes the removal of unsubstituted N-terminal amino acids from various peptides. This Pseudomonas fluorescens (strain SBW25) protein is Probable cytosol aminopeptidase.